Here is a 103-residue protein sequence, read N- to C-terminus: Large ribosomal subunit protein bL21 (103 aa).

This sequence belongs to the bacterial ribosomal protein bL21 family. As to quaternary structure, part of the 50S ribosomal subunit. Contacts protein L20.

This protein binds to 23S rRNA in the presence of protein L20. The chain is Large ribosomal subunit protein bL21 from Sodalis glossinidius (strain morsitans).